The sequence spans 584 residues: Phenylalanine--tRNA ligase beta subunit (584 aa).

A B5 domain is found at 290-369 (FSVRTKTVTH…RALGFNSLEP (80 aa)). Residues D347, D353, D356, and D357 each contribute to the Mg(2+) site.

It belongs to the phenylalanyl-tRNA synthetase beta subunit family. Type 2 subfamily. In terms of assembly, tetramer of two alpha and two beta subunits. Mg(2+) is required as a cofactor.

It is found in the cytoplasm. The catalysed reaction is tRNA(Phe) + L-phenylalanine + ATP = L-phenylalanyl-tRNA(Phe) + AMP + diphosphate + H(+). In Haloarcula marismortui (strain ATCC 43049 / DSM 3752 / JCM 8966 / VKM B-1809) (Halobacterium marismortui), this protein is Phenylalanine--tRNA ligase beta subunit.